Here is a 479-residue protein sequence, read N- to C-terminus: uncharacterized protein (479 aa).

The tract at residues Leu-180–Thr-203 is disordered. A compositionally biased stretch (polar residues) spans Ser-187–Ile-202. A PE-PPE domain is found at Pro-240–Ser-462.

Belongs to the mycobacterial PPE family.

This is an uncharacterized protein from Mycobacterium tuberculosis (strain CDC 1551 / Oshkosh).